We begin with the raw amino-acid sequence, 566 residues long: Proline--tRNA ligase 1 (566 aa).

It belongs to the class-II aminoacyl-tRNA synthetase family. ProS type 1 subfamily. As to quaternary structure, homodimer.

The protein resides in the cytoplasm. The enzyme catalyses tRNA(Pro) + L-proline + ATP = L-prolyl-tRNA(Pro) + AMP + diphosphate. Catalyzes the attachment of proline to tRNA(Pro) in a two-step reaction: proline is first activated by ATP to form Pro-AMP and then transferred to the acceptor end of tRNA(Pro). As ProRS can inadvertently accommodate and process non-cognate amino acids such as alanine and cysteine, to avoid such errors it has two additional distinct editing activities against alanine. One activity is designated as 'pretransfer' editing and involves the tRNA(Pro)-independent hydrolysis of activated Ala-AMP. The other activity is designated 'posttransfer' editing and involves deacylation of mischarged Ala-tRNA(Pro). The misacylated Cys-tRNA(Pro) is not edited by ProRS. The sequence is that of Proline--tRNA ligase 1 from Bacillus cereus (strain ATCC 14579 / DSM 31 / CCUG 7414 / JCM 2152 / NBRC 15305 / NCIMB 9373 / NCTC 2599 / NRRL B-3711).